A 255-amino-acid chain; its full sequence is Geranylgeranylglyceryl phosphate synthase (255 aa).

Residues Asp31 and Ser60 each contribute to the Mg(2+) site. Sn-glycerol 1-phosphate-binding positions include 179 to 185 (YLEAGSG), 211 to 212 (GG), and 233 to 234 (GT).

The protein belongs to the GGGP/HepGP synthase family. Group II subfamily. Requires Mg(2+) as cofactor.

It localises to the cytoplasm. The enzyme catalyses sn-glycerol 1-phosphate + (2E,6E,10E)-geranylgeranyl diphosphate = sn-3-O-(geranylgeranyl)glycerol 1-phosphate + diphosphate. It functions in the pathway membrane lipid metabolism; glycerophospholipid metabolism. In terms of biological role, prenyltransferase that catalyzes the transfer of the geranylgeranyl moiety of geranylgeranyl diphosphate (GGPP) to the C3 hydroxyl of sn-glycerol-1-phosphate (G1P). This reaction is the first ether-bond-formation step in the biosynthesis of archaeal membrane lipids. This chain is Geranylgeranylglyceryl phosphate synthase, found in Methanothrix thermoacetophila (strain DSM 6194 / JCM 14653 / NBRC 101360 / PT) (Methanosaeta thermophila).